A 341-amino-acid chain; its full sequence is Cyclin-Y (341 aa).

A lipid anchor (N-myristoyl glycine) is attached at Gly-2. Phosphoserine occurs at positions 21 and 25. A Phosphothreonine modification is found at Thr-30. The residue at position 33 (Ser-33) is a Phosphoserine. Residue Thr-37 is modified to Phosphothreonine. Thr-67 carries the phosphothreonine; by CDK14 modification. Residues Ser-71 and Ser-73 each carry the phosphoserine; by CDK14 modification. A Phosphothreonine modification is found at Thr-75. The residue at position 83 (Ser-83) is a Phosphoserine; by CDK14. A phosphoserine mark is found at Ser-99, Ser-100, and Ser-102. Residues 143 to 265 enclose the Cyclin N-terminal domain; the sequence is DIFDENLHPL…FLELLQFNIN (123 aa). Ser-280 is modified (phosphoserine). Residues Ser-288 and Ser-295 each carry the phosphoserine; by CDK14 modification. Residues Ser-324 and Ser-326 each carry the phosphoserine modification. Thr-331 is subject to Phosphothreonine.

The protein belongs to the cyclin family. Cyclin Y subfamily. Found in a complex with CAPRIN2, LRP6 and CDK14 during G2/M stage; CAPRIN2 functions as a scaffold for the complex by binding to CCNY via its N terminus and to CDK14 via its C terminus. Interacts with CDK14. Interacts with CDK16. Interacts with LRP6. In terms of processing, ubiquitinated; leading to its degradation. Post-translationally, heavily phosphorylated. Phosphorylation at Ser-71 and Ser-73 by CDK14 is enhanced during the G2 and M cell cycle phases, and creates a phosphodegron triggering SCF-dependent ubiquitination. In terms of tissue distribution, widely expressed.

The protein localises to the cell membrane. It is found in the nucleus. Positive regulatory subunit of the cyclin-dependent kinases CDK14/PFTK1 and CDK16. Acts as a cell-cycle regulator of Wnt signaling pathway during G2/M phase by recruiting CDK14/PFTK1 to the plasma membrane and promoting phosphorylation of LRP6, leading to the activation of the Wnt signaling pathway. Recruits CDK16 to the plasma membrane. Isoform 3 might play a role in the activation of MYC-mediated transcription. The chain is Cyclin-Y (CCNY) from Homo sapiens (Human).